We begin with the raw amino-acid sequence, 436 residues long: MQKTAPRPPSARISFLSASVLGLGAAVASRGAVFLVNIMLAHSLTVHDFGLFSYAYVTALNLGLFLATGVSQAAGHVLPLTEDPERRRRQLCAFIVLLVALIAVAATALYLSATSISIAAFGSAQGGEALRMAAIVLIATAFTQALQAFLYAMHEHRASASVSIGAALLLLAMLWTMGPIRQPVVALVIFLAINAGAAASQLVILGRTTQNQRGPWRTGRQELRLAFKHALPSVLTTSMGAPVHWICLSMLAAMTDGAHQLALFSVAFQWYIAITFIPATLGNLALPFLARNTGATEAMVRQRFRSALLFGGGLSLALGCMAFLLAGQIFAWLYPAAYGSAAASMRSLAVAAALCGISVLLQQRIAAAGKFWRNFAMAAVYSVIYVAAAYLALRLGYGAPSIGLAMSAAYCCLILFQTLTLQSDSGAAIRLGRSFS.

Helical transmembrane passes span 20 to 40, 49 to 69, 91 to 111, 132 to 152, 160 to 180, 184 to 204, 234 to 254, 261 to 281, 307 to 327, 341 to 361, 375 to 395, and 396 to 416; these read VLGL…NIML, FGLF…LATG, LCAF…ALYL, MAAI…FLYA, ASVS…MGPI, VVAL…QLVI, VLTT…LAAM, LALF…PATL, ALLF…LLAG, AAAS…SVLL, FAMA…ALRL, and GYGA…LILF.

It to E.coli bicyclomycin resistance protein (BCR).

It localises to the cell inner membrane. Its function is as follows. Probably involved in polymerization and/or export of exopolysaccharide EPS I which functions as a virulence factor. May play a role in export of EPS I or its intermediates across the membranes. This chain is EPS I polysaccharide export inner membrane protein EpsE (epsE), found in Ralstonia nicotianae (strain ATCC BAA-1114 / GMI1000) (Ralstonia solanacearum).